The chain runs to 300 residues: Tetrahydromethanopterin S-methyltransferase subunit E (300 aa).

A run of 6 helical transmembrane segments spans residues 62–82 (PVSYGLYVAAAGATAWALMGM), 86–106 (PILAIIVGSAVAALVHGAYSV), 135–155 (PIVGHGFIAVFCMLFAAYLAV), 158–178 (LGNPFPLPLVALIFGITVGAI), 226–246 (YFCSKLGGPLTGLAFGLIIFL), and 261–281 (LITKAAIAIVVGLIVVITTLL).

Belongs to the MtrE family. The complex is composed of 8 subunits; MtrA, MtrB, MtrC, MtrD, MtrE, MtrF, MtrG and MtrH.

It is found in the cell membrane. The catalysed reaction is 5-methyl-5,6,7,8-tetrahydromethanopterin + coenzyme M + 2 Na(+)(in) = 5,6,7,8-tetrahydromethanopterin + methyl-coenzyme M + 2 Na(+)(out). It participates in one-carbon metabolism; methanogenesis from CO(2); methyl-coenzyme M from 5,10-methylene-5,6,7,8-tetrahydromethanopterin: step 2/2. In terms of biological role, part of a complex that catalyzes the formation of methyl-coenzyme M and tetrahydromethanopterin from coenzyme M and methyl-tetrahydromethanopterin. This is an energy-conserving, sodium-ion translocating step. The sequence is that of Tetrahydromethanopterin S-methyltransferase subunit E from Methanococcus aeolicus (strain ATCC BAA-1280 / DSM 17508 / OCM 812 / Nankai-3).